The chain runs to 344 residues: Arginine N-succinyltransferase (344 aa).

Leu-125 lines the succinyl-CoA pocket. Residue His-229 is the Proton donor of the active site.

Belongs to the arginine N-succinyltransferase family.

It carries out the reaction succinyl-CoA + L-arginine = N(2)-succinyl-L-arginine + CoA + H(+). The protein operates within amino-acid degradation; L-arginine degradation via AST pathway; L-glutamate and succinate from L-arginine: step 1/5. In terms of biological role, catalyzes the transfer of succinyl-CoA to arginine to produce N(2)-succinylarginine. In Salmonella arizonae (strain ATCC BAA-731 / CDC346-86 / RSK2980), this protein is Arginine N-succinyltransferase.